The following is a 421-amino-acid chain: ATP-dependent RNA helicase RhlB (421 aa).

The Q motif signature appears at 9 to 37 (QKFSDFALHPKVVEALEKKGFHNCTPIQA). The region spanning 40 to 219 (LPLTLAGRDV…FEQMNNAEYI (180 aa)) is the Helicase ATP-binding domain. An ATP-binding site is contributed by 53-60 (AQTGTGKT). The DEAD box motif lies at 165 to 168 (DEAD). The Helicase C-terminal domain occupies 245–390 (RLLQTLIEEE…VSKYNPDALM (146 aa)). The tract at residues 392-421 (DLPKPLRLTRPRTGNGPRRTGAPRNRRRSG) is disordered. Residues 402–414 (PRTGNGPRRTGAP) are compositionally biased toward low complexity.

Belongs to the DEAD box helicase family. RhlB subfamily. Component of the RNA degradosome, which is a multiprotein complex involved in RNA processing and mRNA degradation.

The protein resides in the cytoplasm. The enzyme catalyses ATP + H2O = ADP + phosphate + H(+). Functionally, DEAD-box RNA helicase involved in RNA degradation. Has RNA-dependent ATPase activity and unwinds double-stranded RNA. The polypeptide is ATP-dependent RNA helicase RhlB (Escherichia coli O157:H7).